Consider the following 427-residue polypeptide: Glutamate-1-semialdehyde 2,1-aminomutase (427 aa).

N6-(pyridoxal phosphate)lysine is present on K265.

The protein belongs to the class-III pyridoxal-phosphate-dependent aminotransferase family. HemL subfamily. In terms of assembly, homodimer. The cofactor is pyridoxal 5'-phosphate.

It localises to the cytoplasm. The catalysed reaction is (S)-4-amino-5-oxopentanoate = 5-aminolevulinate. It functions in the pathway porphyrin-containing compound metabolism; protoporphyrin-IX biosynthesis; 5-aminolevulinate from L-glutamyl-tRNA(Glu): step 2/2. The protein is Glutamate-1-semialdehyde 2,1-aminomutase of Marinomonas sp. (strain MWYL1).